The chain runs to 492 residues: GTPase-GDP dissociation stimulator arz1 (492 aa).

The protein resides in the cytoplasm. It is found in the nucleus. In terms of biological role, probably acts as a GEF (guanine nucleotide exchange factor) for the Rho family of small GTP-binding proteins (G proteins) that stimulates the dissociation of GDP to enable subsequent binding of GTP. May also chaperone the processing and/or trafficking of small GTPases independently of GEF activity. May be involved in the control of polarized cell growth via CDC42-mediated signaling. May also be involved in the control of cell-wall organization via RHO1-mediated signaling. This is GTPase-GDP dissociation stimulator arz1 from Schizosaccharomyces pombe (strain 972 / ATCC 24843) (Fission yeast).